A 193-amino-acid polypeptide reads, in one-letter code: Phosphatidylglycerophosphatase and protein-tyrosine phosphatase 1 (193 aa).

A mitochondrion-targeting transit peptide spans methionine 1–glycine 31. A Tyrosine-protein phosphatase domain is found at tryptophan 37–alanine 188. Residue lysine 85 is modified to N6-succinyllysine. The Phosphocysteine intermediate role is filled by cysteine 132.

The protein belongs to the protein-tyrosine phosphatase family. Non-receptor class dual specificity subfamily. In terms of assembly, interacts with STYXL1; the interaction inhibits PTPMT1 catalytic activity. Expressed in liver and in pancreatic beta cells.

The protein resides in the mitochondrion inner membrane. It carries out the reaction O-phospho-L-tyrosyl-[protein] + H2O = L-tyrosyl-[protein] + phosphate. The catalysed reaction is O-phospho-L-seryl-[protein] + H2O = L-seryl-[protein] + phosphate. It catalyses the reaction O-phospho-L-threonyl-[protein] + H2O = L-threonyl-[protein] + phosphate. The enzyme catalyses a 1,2-diacyl-sn-glycero-3-phospho-(1'-sn-glycero-3'-phosphate) + H2O = a 1,2-diacyl-sn-glycero-3-phospho-(1'-sn-glycerol) + phosphate. It carries out the reaction 1,2-di-(9Z-octadecenoyl)-sn-glycero-3-phospho-(1'-sn-glycerol-3'-phosphate) + H2O = 1,2-di-(9Z-octadecenoyl)-sn-glycero-3-phospho-(1'-sn-glycerol) + phosphate. The catalysed reaction is 1,2-dioctanoyl-sn-glycero-3-phospho-(1D-myo-inositol-5-phosphate) + H2O = 1,2-dioctanoyl-sn-glycero-3-phospho-(1D-myo-inositol) + phosphate. It catalyses the reaction a 1-acyl-2-hexanoyl-sn-glycero-3-phospho-(1D-myo-inositol-5-phosphate) + H2O = a 1-acyl-2-hexanoyl-sn-glycero-3-phospho-(1D-myo-inositol) + phosphate. The enzyme catalyses 1,2-dibutyryl-sn-glycero-3-phospho-(1D-myo-inositol-5-phosphate) + H2O = 1,2-dibutyryl-sn-glycero-3-phospho-(1D-myo-inositol) + phosphate. The protein operates within phospholipid metabolism; phosphatidylglycerol biosynthesis; phosphatidylglycerol from CDP-diacylglycerol: step 2/2. Lipid phosphatase which dephosphorylates phosphatidylglycerophosphate (PGP) to phosphatidylglycerol (PG). PGP is an essential intermediate in the biosynthetic pathway of cardiolipin, a mitochondrial-specific phospholipid regulating the membrane integrity and activities of the organelle. Has also been shown to display phosphatase activity toward phosphoprotein substrates, specifically mediates dephosphorylation of mitochondrial proteins, thereby playing an essential role in ATP production. Has probably a preference for proteins phosphorylated on Ser and/or Thr residues compared to proteins phosphorylated on Tyr residues. Probably involved in regulation of insulin secretion in pancreatic beta cells. May prevent intrinsic apoptosis, probably by regulating mitochondrial membrane integrity. This is Phosphatidylglycerophosphatase and protein-tyrosine phosphatase 1 from Rattus norvegicus (Rat).